The chain runs to 1216 residues: Tyrosine-protein kinase receptor ver-4 (1216 aa).

At 1-789 (MRVSLTEFLV…VKVAGASSSS (789 aa)) the chain is on the extracellular side. Asn142, Asn195, Asn206, Asn245, Asn283, Asn333, Asn348, Asn384, Asn402, Asn412, Asn496, Asn508, Asn588, Asn599, Asn664, and Asn703 each carry an N-linked (GlcNAc...) asparagine glycan. Ig-like C2-type domains follow at residues 596-691 (KSVN…TSIS) and 697-783 (PPFL…VKVA). Residues Cys619 and Cys675 are joined by a disulfide bond. Cys721 and Cys765 are disulfide-bonded. A helical transmembrane segment spans residues 790–810 (FFWLFITFFAFVVVGIVVSLL). At 811-1216 (WKLFGQKDLK…WVQKPTQLFF (406 aa)) the chain is on the cytoplasmic side. One can recognise a Protein kinase domain in the interval 870–1181 (LEILETLGSG…IKLFKNHIQY (312 aa)). ATP-binding positions include 876–884 (LGSGQFGIV) and Lys908. Asp1042 acts as the Proton acceptor in catalysis.

Belongs to the protein kinase superfamily. Tyr protein kinase family.

The protein resides in the cell membrane. The enzyme catalyses L-tyrosyl-[protein] + ATP = O-phospho-L-tyrosyl-[protein] + ADP + H(+). Functionally, receptor tyrosine kinase which may be involved, downstream of pvf-1, in the positioning of ray 1, the most anterior ray sensillum in the male tail. This chain is Tyrosine-protein kinase receptor ver-4, found in Caenorhabditis elegans.